The chain runs to 1038 residues: Subtilisin-like protease SBT6.1 (1038 aa).

The first 30 residues, methionine 1 to proline 30, serve as a signal peptide directing secretion. The propeptide at serine 31–leucine 181 is removed in mature form. Residues asparagine 44, asparagine 52, asparagine 171, and asparagine 175 are each glycosylated (N-linked (GlcNAc...) asparagine). The region spanning asparagine 175–leucine 473 is the Peptidase S8 domain. Over alanine 182 to arginine 1000 the chain is Lumenal. Aspartate 212 serves as the catalytic Charge relay system. An N-linked (GlcNAc...) asparagine glycan is attached at asparagine 230. Catalysis depends on histidine 243, which acts as the Charge relay system. N-linked (GlcNAc...) asparagine glycosylation is present at asparagine 300. Serine 409 acts as the Charge relay system in catalysis. N-linked (GlcNAc...) asparagine glycans are attached at residues asparagine 513, asparagine 579, asparagine 902, and asparagine 954. A helical transmembrane segment spans residues tryptophan 1001 to isoleucine 1021. The Cytoplasmic segment spans residues arginine 1022–alanine 1038.

This sequence belongs to the peptidase S8 family. Interacts with PME1 and PME5. Expressed in the vasculature of roots, cotyledons and leaves.

Its subcellular location is the golgi apparatus membrane. Serine protease that catalyzes the first step (site-1 cleavage) in the proteolytic activation of various factors, prior to site-2 cleavage. Part of a regulated intramembrane proteolysis (RIP) cascade. Cleaves BZIP17 and BZIP28 after the Arg-Arg-Ile-Leu (RRIL) motif. May cleave BZIP49 after the RRIL motif. Targets the membrane-associated BZIP17 factor, which functions as a stress sensor and transducer in a signaling pathway that resembles an ER stress response. Following salt stress, BZIP17 is cleaved by SBT6.1 (S1P) and S2P at the C-terminus and the N-terminal bZIP component is translocated to the nucleus, where it activates the expression of salt stress response genes. Cleaves the pectinesterases PME1 after the Arg-Arg-Leu-Met (RRLM) and Arg-Arg-Leu-Leu (RRLL) motifs, and PME5 after the Arg-Arg-Leu-Leu (RRLL) and Arg-Lys-Leu-Met (RKLM) motifs. This processing and C-terminus release occurs in the Golgi apparatus and is required for cell wall targeting of pectinesterases. Thus, SBT6.1 mediates the regulated release of mature pectinesterases from the Golgi. Cleaves the peptide growth factor RALF23 after the Arg-Arg-Ile-Leu (RRIL) motif. This processing is required for RALF23 function in the negative regulation of brassinolide (BL)-mediated signaling pathway (e.g. BL-induced hypocotyl elongation and branching limitation). In Arabidopsis thaliana (Mouse-ear cress), this protein is Subtilisin-like protease SBT6.1.